Consider the following 688-residue polypeptide: Glycine--tRNA ligase beta subunit (688 aa).

The protein belongs to the class-II aminoacyl-tRNA synthetase family. Tetramer of two alpha and two beta subunits.

Its subcellular location is the cytoplasm. The enzyme catalyses tRNA(Gly) + glycine + ATP = glycyl-tRNA(Gly) + AMP + diphosphate. This Listeria welshimeri serovar 6b (strain ATCC 35897 / DSM 20650 / CCUG 15529 / CIP 8149 / NCTC 11857 / SLCC 5334 / V8) protein is Glycine--tRNA ligase beta subunit.